The chain runs to 273 residues: Undecaprenyl-diphosphatase (273 aa).

6 consecutive transmembrane segments (helical) span residues 43 to 63 (IGNV…CWEY), 82 to 102 (KFVL…VLLI), 109 to 129 (LFNP…ILWA), 185 to 205 (TEFS…YDVL), 214 to 234 (ADLP…FVAV), and 249 to 269 (FAWY…LGWI).

This sequence belongs to the UppP family.

The protein localises to the cell inner membrane. The enzyme catalyses di-trans,octa-cis-undecaprenyl diphosphate + H2O = di-trans,octa-cis-undecaprenyl phosphate + phosphate + H(+). Functionally, catalyzes the dephosphorylation of undecaprenyl diphosphate (UPP). Confers resistance to bacitracin. The sequence is that of Undecaprenyl-diphosphatase from Laribacter hongkongensis (strain HLHK9).